A 236-amino-acid polypeptide reads, in one-letter code: NAP1-binding protein 2 (236 aa).

Residue Ser102 is modified to Phosphoserine. The 62-residue stretch at 110-171 (IVNQRAVALY…PEEFVSYIQP (62 aa)) folds into the SH3 domain. Residues Ser196 and Ser235 each carry the phosphoserine modification.

In terms of assembly, interacts with PBS2 and PTC1.

The protein resides in the cytoplasm. In terms of biological role, negatively regulates the high-osmolarity glycerol (HOG) pathway through its negative regulation of the HOG1 kinase activity. Mediates the binding between the PTC1 phosphatase and the PBS2 MAP/ERK kinase (MEK). With PTC1, regulates endoplasmic reticulum inheritance through the cell wall integrity (CWI) MAPK pathway by modulating the MAPK, SLT2. The protein is NAP1-binding protein 2 (NBP2) of Saccharomyces cerevisiae (strain ATCC 204508 / S288c) (Baker's yeast).